The sequence spans 384 residues: Glucans biosynthesis protein C (384 aa).

The next 10 helical transmembrane spans lie at 17 to 37, 54 to 74, 91 to 111, 140 to 160, 173 to 193, 212 to 232, 240 to 260, 274 to 294, 311 to 331, and 338 to 358; these read AWLMLLGIPFHISLIYSTHSW, FIHAFRMQVFFVISGYFSYML, VGIPMLTAIPLLTLPQFILLQ, LWFLLVLVILTTVSIGIFTWF, AISLAKLSLIFFLLGVAYAAI, FIVMQTLFYVPFFILGALAFI, FTTPSRGCTLGAAVAFIAYLL, TESVITMVMGLWMVNVVFSLG, ASLFIYLVHHPLTLFFGAYIT, and LIGFLCGLIFVMGIALILYEI.

This sequence belongs to the acyltransferase 3 family. OpgC subfamily.

It localises to the cell membrane. The protein operates within glycan metabolism; osmoregulated periplasmic glucan (OPG) biosynthesis. Functionally, necessary for the succinyl substitution of periplasmic glucans. Could catalyze the transfer of succinyl residues from the cytoplasmic side of the membrane to the nascent glucan backbones on the periplasmic side of the membrane. The polypeptide is Glucans biosynthesis protein C (Salmonella typhimurium (strain LT2 / SGSC1412 / ATCC 700720)).